The following is a 250-amino-acid chain: MGSQHSAAARPSSCRRKQEDDRDGLLAEREQEEAIAQFPYVEFTGRDSITCLTCQGTGYIPTEQVNELVALIPHSDQRLRPQRTKQYVLLSILLCLLASGLVVFFLFPHSVLVDDDGIKVVKVTFNKQDSLVILTIMATLKIRNSNFYTVAVTSLSSQIQYMNTVVSTYVTTNVSLIPPRSEQLVNFTGKAEMGGPFSYVYFFCTVPEILVHNIVIFMRTSVKISYIGLMTQSSLETHHYVDCGGNSTAI.

The tract at residues 1–25 (MGSQHSAAARPSSCRRKQEDDRDGL) is disordered. A lipid anchor (N-myristoyl glycine) is attached at glycine 2. The segment covering 16–25 (RKQEDDRDGL) has biased composition (basic and acidic residues). The helical transmembrane segment at 87-107 (YVLLSILLCLLASGLVVFFLF) threads the bilayer. Asparagine 173 and asparagine 186 each carry an N-linked (GlcNAc...) asparagine glycan. The chain crosses the membrane as a helical span at residues 197–217 (FSYVYFFCTVPEILVHNIVIF).

This sequence belongs to the TMEM106 family. In terms of assembly, interacts with TMEM106B.

Its subcellular location is the endoplasmic reticulum membrane. The protein resides in the membrane. This Homo sapiens (Human) protein is Transmembrane protein 106C (TMEM106C).